A 246-amino-acid polypeptide reads, in one-letter code: 4-aminobenzoate synthase (246 aa).

The Fe(2+) site is built by glutamate 88, histidine 95, glutamate 149, histidine 181, aspartate 185, and histidine 188.

The protein belongs to the CADD family. Homodimer. The cofactor is Fe(2+). Requires Mn(2+) as cofactor.

In terms of biological role, involved in de novo para-aminobenzoate (PABA) biosynthesis. Acts as a self-sacrificing or 'suicide' enzyme that utilizes its own active site tyrosine residue(s) as the substrate for PABA synthesis. The side chain of the tyrosine residue is released from the protein backbone via cleavage of the C(alpha)-C(beta) bond, leaving a glycine in place of the original tyrosine residue. Reaction requires O(2) and a reduced dimetal cofactor. The protein is 4-aminobenzoate synthase of Nitrosomonas europaea (strain ATCC 19718 / CIP 103999 / KCTC 2705 / NBRC 14298).